The following is a 428-amino-acid chain: MSPGAFRVALLPLFLLVCVTQQKPLQNWEQASPGENAHSSLGLSGAGEEGVFDLQMFLENMKVDFLRSLNLSGIPSQDKTRAEPPQYMIDLYNRYTTDKSSTPASNIVRSFSVEDAISTAATEDFPFQKHILIFNISIPRHEQITRAELRLYVSCQNDVDSTHGLEGSMVVYDVLEDSETWDQATGTKTFLVSQDIRDEGWETLEVSSAVKRWVRADSTTNKNKLEVTVQSHRESCDTLDISVPPGSKNLPFFVVFSNDRSNGTKETRLELKEMIGHEQETMLVKTAKNAYQVAGESQEEEGLDGYTAVGPLLARRKRSTGASSHCQKTSLRVNFEDIGWDSWIIAPKEYDAYECKGGCFFPLADDVTPTKHAIVQTLVHLKFPTKVGKACCVPTKLSPISILYKDDMGVPTLKYHYEGMSVAECGCR.

A signal peptide spans methionine 1–glutamine 22. Residues lysine 23 to arginine 318 constitute a propeptide that is removed on maturation. Asparagine 70 and asparagine 135 each carry an N-linked (GlcNAc...) asparagine glycan. An intrachain disulfide couples cysteine 155 to cysteine 236. A glycan (N-linked (GlcNAc...) asparagine) is linked at asparagine 262. 3 disulfide bridges follow: cysteine 326-cysteine 392, cysteine 355-cysteine 425, and cysteine 359-cysteine 427. The tract at residues serine 401 to tyrosine 415 is interaction with ENG.

Belongs to the TGF-beta family. Homodimer; disulfide-linked. Detected in extracellular fluid as mature homodimer, and in complex with its propeptide. Interacts with ACVRL1, BMPR2 and ACVR2B with high affinity (in vitro). Identified in a complex with ACVRL1 and ACVR2B. Has ten times lower affinity for ACVR2A (in vitro). Interacts with ENG, forming a heterotetramer with a 2:2 stoichiometry. Can form a heteromeric complex with ENG and ACVRL1. Interacts with type I receptor ACVR1. In terms of processing, a reversible disulfide bond can be formed between the two subunits in the homodimer; this has no effect on GDF2 activity.

It localises to the secreted. Potent circulating inhibitor of angiogenesis. Signals through the type I activin receptor ACVRL1 but not other Alks. Signaling through SMAD1 in endothelial cells requires TGF-beta coreceptor endoglin/ENG. The chain is Growth/differentiation factor 2 (Gdf2) from Mus musculus (Mouse).